The primary structure comprises 130 residues: MKLLVFALFLQVVQLSLAQDDGKCIDMPKLLKKMQPAIDECGYKDAPTDQAKHDAVTCGLQKLGIVTQNKELVVQTYKDYLDDTILQHKTELYNALDECCPSGTCPAQDTFKCYHEKIDSVCPGDKQKPQ.

Positions Met1–Ala18 are cleaved as a signal peptide.

It belongs to the scoloptoxin-17 family. Contains 4 disulfide bonds. Expressed by the venom gland.

The protein localises to the secreted. The chain is U-scoloptoxin(17)-Er1a from Ethmostigmus rubripes (Giant centipede).